A 353-amino-acid polypeptide reads, in one-letter code: Thiamine-phosphate synthase (353 aa).

Residues 1-128 form a unknown region; sequence MKSMPFAPIA…AASAAAIRYG (128 aa). The segment at 129-353 is thiamine-phosphate synthase; sequence LYDLEVTVLQ…TSLQLLEALR (225 aa). Residues 185 to 189 and Asn217 contribute to the 4-amino-2-methyl-5-(diphosphooxymethyl)pyrimidine site; that span reads QYRNK. Mg(2+) contacts are provided by Asp218 and Asp237. Position 256 (Ser256) interacts with 4-amino-2-methyl-5-(diphosphooxymethyl)pyrimidine. 282–284 contributes to the 2-[(2R,5Z)-2-carboxy-4-methylthiazol-5(2H)-ylidene]ethyl phosphate binding site; that stretch reads TAT. Lys285 lines the 4-amino-2-methyl-5-(diphosphooxymethyl)pyrimidine pocket. Gly312 is a 2-[(2R,5Z)-2-carboxy-4-methylthiazol-5(2H)-ylidene]ethyl phosphate binding site.

The protein belongs to the thiamine-phosphate synthase family. Mg(2+) serves as cofactor.

The enzyme catalyses 2-[(2R,5Z)-2-carboxy-4-methylthiazol-5(2H)-ylidene]ethyl phosphate + 4-amino-2-methyl-5-(diphosphooxymethyl)pyrimidine + 2 H(+) = thiamine phosphate + CO2 + diphosphate. It carries out the reaction 2-(2-carboxy-4-methylthiazol-5-yl)ethyl phosphate + 4-amino-2-methyl-5-(diphosphooxymethyl)pyrimidine + 2 H(+) = thiamine phosphate + CO2 + diphosphate. The catalysed reaction is 4-methyl-5-(2-phosphooxyethyl)-thiazole + 4-amino-2-methyl-5-(diphosphooxymethyl)pyrimidine + H(+) = thiamine phosphate + diphosphate. It functions in the pathway cofactor biosynthesis; thiamine diphosphate biosynthesis; thiamine phosphate from 4-amino-2-methyl-5-diphosphomethylpyrimidine and 4-methyl-5-(2-phosphoethyl)-thiazole: step 1/1. Functionally, condenses 4-methyl-5-(beta-hydroxyethyl)thiazole monophosphate (THZ-P) and 2-methyl-4-amino-5-hydroxymethyl pyrimidine pyrophosphate (HMP-PP) to form thiamine monophosphate (TMP). The chain is Thiamine-phosphate synthase from Prochlorococcus marinus (strain MIT 9313).